The sequence spans 260 residues: MESHFNWYGVPRLQKASDACPRESCSSALPEAREGANVHFPPHPVPREHFSCGAPKPVAGAPALNASLMDGGALPRLVPTSSGVAGACTARRRPPSPELLRCSRRRRSGATEASSSSAAVARRNERERNRVKLVNLGFQALRQHVPHGGANKKLSKVETLRSAVEYIRALQRLLAEHDAVRAALSGGLLTPATRPSDVCTQPSASPASASLSCTSTSPDRLGCSEPASPRSAYSSEDSSCEGETYPMGQMFDFSNWLGGY.

Disordered stretches follow at residues alanine 85–arginine 126 and proline 191–serine 239. 2 stretches are compositionally biased toward low complexity: residues alanine 110 to alanine 121 and threonine 200 to proline 218. A bHLH domain is found at alanine 118–leucine 170.

As to quaternary structure, efficient DNA binding requires dimerization with another bHLH protein. Forms heterodimers with bHLH transcription factor TCF3. May not heterodimerise with bHLH protein HAND1. Expressed in Schwann cells in the peripheral nerve (at protein level). Also expressed by endothelial cells (at protein level). May be expressed in neuronal precursor cells.

The protein resides in the nucleus. It localises to the cytoplasm. Functionally, transcription factor. Binds to E-box motifs 5'-CANNTG-3' in the regulatory elements of target genes, probably as a heterodimer with another basic helix-loop-helix (bHLH) protein such as the transcription factor TCF3. May bind both open and closed chromatin, acting as a pioneer transcription factor to allow other factors to bind and activate lineage-specific genes. Required during post-implantation development for the generation of some differentiated trophoblast cell types. Transcriptional activity of ASCL2 may be antagonised in a subset of trophoblast cells by bHLH transcription factor HAND1, perhaps by competing for dimerization with other bHLH proteins. Involved in differentiation and function of follicular T-helper (Tfh) cells, thereby playing a role in germinal center responses; probably modulates expression of genes involved in Tfh cell function, such as BCL6. May also act as a suppressor of Th1-, Th2- and Th17-cell differentiation. Induces the formation of stem cells in intestinal crypts in vitro, synergistically activating transcription of target genes, such as SOX9, together with TCF4/beta-catenin. May form a bistable transcriptional switch, controlling expression of its own gene together with Wnt/R-spondin signaling, and thereby maintaining stem cell characteristics. Modulates expression of target genes, including perhaps down-regulating EGR1/Krox24 and chemokine CXCL10/Mob-1 and up-regulating CXCR4 and CDKN1C/p57kip2, in Schwann cells. May play a role in reducing proliferation of Schwann cells, perhaps acting via modulation of expression of CDKN1C. May be dispensable for blastocyst formation and later embryonic function. May be involved in the determination of neuronal precursors. The sequence is that of Achaete-scute homolog 2 (Ascl2) from Rattus norvegicus (Rat).